We begin with the raw amino-acid sequence, 345 residues long: Type II restriction enzyme HgiCI (345 aa).

The catalysed reaction is Endonucleolytic cleavage of DNA to give specific double-stranded fragments with terminal 5'-phosphates.. Its function is as follows. A P subtype restriction enzyme that recognizes the double-stranded sequence 5'-GGYRCC-3' and cleaves after G-1. This is Type II restriction enzyme HgiCI (hgiCIR) from Herpetosiphon aurantiacus (Herpetosiphon giganteus).